Reading from the N-terminus, the 115-residue chain is Large ribosomal subunit protein bL19 (115 aa).

It belongs to the bacterial ribosomal protein bL19 family.

Its function is as follows. This protein is located at the 30S-50S ribosomal subunit interface and may play a role in the structure and function of the aminoacyl-tRNA binding site. The polypeptide is Large ribosomal subunit protein bL19 (Clostridium kluyveri (strain ATCC 8527 / DSM 555 / NBRC 12016 / NCIMB 10680 / K1)).